Reading from the N-terminus, the 403-residue chain is Soluble calcium-activated nucleotidase 1 (403 aa).

Over 1-44 the chain is Cytoplasmic; sequence MPIQPFDQREWNEPMHSLRISVGGLPVLASMTKATDPRFRPRWR. The chain crosses the membrane as a helical; Signal-anchor for type II membrane protein span at residues 45–61; it reads VILTSFVGAALLWLLYS. The Lumenal segment spans residues 62–403; the sequence is HHQTPVSGRP…SVKYEGIEFI (342 aa). Residue Asn90 is glycosylated (N-linked (GlcNAc...) asparagine). Positions 170, 171, 217, 286, 347, and 398 each coordinate Ca(2+).

This sequence belongs to the apyrase family. In terms of assembly, monomer. Homodimer; dimerization is Ca(2+)-dependent. The cofactor is Ca(2+). Detected in intestine, thymus, heart, lung, spleen, kidney, liver, testis, skeletal muscle and brain.

It localises to the endoplasmic reticulum membrane. Its subcellular location is the golgi apparatus. The protein resides in the golgi stack membrane. The enzyme catalyses a ribonucleoside 5'-diphosphate + H2O = a ribonucleoside 5'-phosphate + phosphate + H(+). Its function is as follows. Calcium-dependent nucleotidase with a preference for UDP. The order of activity with different substrates is UDP &gt; GDP &gt; IDP &gt;&gt; UTP &gt; CDP = GTP = ITP. Has very low activity towards ADP and even lower activity towards ATP. Does not hydrolyze AMP and GMP. Involved in proteoglycan synthesis. The sequence is that of Soluble calcium-activated nucleotidase 1 (Cant1) from Rattus norvegicus (Rat).